We begin with the raw amino-acid sequence, 162 residues long: Thy-1 membrane glycoprotein (162 aa).

The signal sequence occupies residues 1–19 (MNPAISVALLLSVLQVSRG). Glutamine 20 carries the post-translational modification Pyrrolidone carboxylic acid. One can recognise an Ig-like V-type domain in the interval 20 to 127 (QKVTSLTACL…NKSISVYRDK (108 aa)). Cystine bridges form between cysteine 28/cysteine 131 and cysteine 38/cysteine 105. N-linked (GlcNAc...) asparagine glycosylation is found at asparagine 42, asparagine 94, and asparagine 118. The GPI-anchor amidated cysteine; alternate moiety is linked to residue cysteine 131. Positions 132 to 162 (GGISLLVQNTSWMLLLLLSLSLLQALDFISL) are cleaved as a propeptide — removed in mature form.

Its subcellular location is the cell membrane. In terms of biological role, may play a role in cell-cell or cell-ligand interactions during synaptogenesis and other events in the brain. The polypeptide is Thy-1 membrane glycoprotein (Thy1) (Mus musculus (Mouse)).